We begin with the raw amino-acid sequence, 275 residues long: MGTLGRAFYSVGFWIRETGQALDRLGCRLQGKNYFREQLSRHRTLMNVFDKAPIVDKEAFVAPSASVIGDVHIGRGSSIWYGCVLRGDVNTVSVGSGTNIQDNSLVHVAKSNLSGKVHPTIIGDNVTIGHSAVLHGCTVEDETFIGMGATLLDGVVVEKHGMVAAGALVRQNTRIPSGEVWGGNPARFLRKLTDEEIAFISQSATNYSNLAQAHAAENAKPLNVIEFEKVLRKKHALKDEEYDSMLGIVRETPPELNLPNNILPDKETKRPSNVN.

Residues 1–43 (MGTLGRAFYSVGFWIRETGQALDRLGCRLQGKNYFREQLSRHR) constitute a mitochondrion transit peptide. Substrate contacts are provided by residues 86–88 (RGD) and 101–102 (QD). Zn(2+) contacts are provided by histidine 107, histidine 130, and histidine 135. Position 209 (asparagine 209) interacts with substrate. Positions 256 to 275 (LNLPNNILPDKETKRPSNVN) are disordered. The segment covering 264–275 (PDKETKRPSNVN) has biased composition (basic and acidic residues).

Belongs to the gamma-class carbonic anhydrase family. Homotrimer. Component of the mitochondrial oxidoreductase respiratory chain complex I; element of the extra matrix-exposed domain, which is attached to the membrane arm of this complex. It depends on Zn(2+) as a cofactor.

Its subcellular location is the mitochondrion membrane. Its function is as follows. Enzyme involved in the catabolism of H(2)CO(3) but that does not mediates the reversible hydration of carbon dioxide. Mediates complex I assembly in mitochondria and respiration. In Arabidopsis thaliana (Mouse-ear cress), this protein is Gamma carbonic anhydrase 1, mitochondrial (GAMMACA1).